Here is a 488-residue protein sequence, read N- to C-terminus: uncharacterized protein (488 aa).

Transmembrane regions (helical) follow at residues 2 to 22 (FGLP…VFLV), 27 to 47 (VHAF…GGMS), 59 to 79 (FGGT…MGSV), 106 to 126 (LAIT…FVIL), 176 to 196 (IGAM…GIVL), 241 to 261 (LLPI…HLFV), 275 to 295 (IVSF…ISVY), 314 to 334 (VKTA…GAVL), 347 to 367 (IANL…LVRF), 368 to 388 (IQGS…PILA), 438 to 458 (VPTT…NLIF), and 461 to 481 (DGSV…LFYI).

It belongs to the GntP permease family.

It is found in the cell inner membrane. This is an uncharacterized protein from Haemophilus influenzae (strain ATCC 51907 / DSM 11121 / KW20 / Rd).